The chain runs to 225 residues: GTP:AMP phosphotransferase, mitochondrial (225 aa).

Position 24 to 29 (G24 to T29) interacts with GTP. Positions S45–L74 are NMP. AMP is bound by residues S46, R51, K72–L74, G103–R106, and Q110. The LID stretch occupies residues N144–D181. Residues R145 and V154–Y155 each bind GTP. AMP contacts are provided by R178 and R189. Residue S218 coordinates GTP.

This sequence belongs to the adenylate kinase family. AK3 subfamily. As to quaternary structure, monomer.

The protein resides in the mitochondrion matrix. It catalyses the reaction a ribonucleoside 5'-triphosphate + AMP = a ribonucleoside 5'-diphosphate + ADP. Functionally, involved in maintaining the homeostasis of cellular nucleotides by catalyzing the interconversion of nucleoside phosphates. Has GTP:AMP phosphotransferase and ITP:AMP phosphotransferase activities. Does not accept ATP as phosphate donor. The polypeptide is GTP:AMP phosphotransferase, mitochondrial (Saccharomyces cerevisiae (strain ATCC 204508 / S288c) (Baker's yeast)).